The sequence spans 231 residues: Ribose-5-phosphate isomerase A (231 aa).

Substrate-binding positions include 31-34 (SGST), 87-90 (DGAD), and 100-103 (KGGG). Catalysis depends on Glu109, which acts as the Proton acceptor. Substrate is bound at residue Lys127.

The protein belongs to the ribose 5-phosphate isomerase family. Homodimer.

It catalyses the reaction aldehydo-D-ribose 5-phosphate = D-ribulose 5-phosphate. It participates in carbohydrate degradation; pentose phosphate pathway; D-ribose 5-phosphate from D-ribulose 5-phosphate (non-oxidative stage): step 1/1. Its function is as follows. Catalyzes the reversible conversion of ribose-5-phosphate to ribulose 5-phosphate. In Chlamydia pneumoniae (Chlamydophila pneumoniae), this protein is Ribose-5-phosphate isomerase A.